We begin with the raw amino-acid sequence, 315 residues long: Acetyl-coenzyme A carboxylase carboxyl transferase subunit alpha (315 aa).

In terms of domain architecture, CoA carboxyltransferase C-terminal spans 40–293 (LQDKSKTLTE…REELSSQLAM (254 aa)).

The protein belongs to the AccA family. In terms of assembly, acetyl-CoA carboxylase is a heterohexamer composed of biotin carboxyl carrier protein (AccB), biotin carboxylase (AccC) and two subunits each of ACCase subunit alpha (AccA) and ACCase subunit beta (AccD).

It is found in the cytoplasm. It catalyses the reaction N(6)-carboxybiotinyl-L-lysyl-[protein] + acetyl-CoA = N(6)-biotinyl-L-lysyl-[protein] + malonyl-CoA. The protein operates within lipid metabolism; malonyl-CoA biosynthesis; malonyl-CoA from acetyl-CoA: step 1/1. Functionally, component of the acetyl coenzyme A carboxylase (ACC) complex. First, biotin carboxylase catalyzes the carboxylation of biotin on its carrier protein (BCCP) and then the CO(2) group is transferred by the carboxyltransferase to acetyl-CoA to form malonyl-CoA. This chain is Acetyl-coenzyme A carboxylase carboxyl transferase subunit alpha, found in Pseudomonas syringae pv. syringae (strain B728a).